The chain runs to 594 residues: MAKLNRSNIGLSLLLSMFLANFITDLEASSHQDLNQPYRTGYHFQPLKNWMNDPNGPMIYKGIYHLFYQYNPYGAVWDVRIVWGHSTSVDLVNWISQPPAFNPSQPSDINGCWSGSVTILPNGKPVILYTGIDQNKGQVQNVAVPVNISDPYLREWSKPPQNPLMTTNAVNGINPDRFRDPTTAWLGRDGEWRVIVGSSTDDRRGLAILYKSRDFFNWTQSMKPLHYEDLTGMWECPDFFPVSITGSDGVETSSVGENGIKHVLKVSLIETLHDYYTIGSYDREKDVYVPDLGFVQNESAPRLDYGKYYASKTFYDDVKKRRILWGWVNESSPAKDDIEKGWSGLQSFPRKIWLDESGKELLQWPIEEIETLRGQQVNWQKKVLKAGSTLQVHGVTAAQADVEVSFKVKELEKADVIEPSWTDPQKICSQGDLSVMSGLGPFGLMVLASNDMEEYTSVYFRIFKSNDDTNKKTKYVVLMCSDQSRSSLNDENDKSTFGAFVAIDPSHQTISLRTLIDHSIVESYGGGGRTCITSRVYPKLAIGENANLFVFNKGTQSVDILTLSAWSLKSAQINGDLMSPFIEREESRSPNHQF.

An N-terminal signal peptide occupies residues 1 to 28 (MAKLNRSNIGLSLLLSMFLANFITDLEA). Residues 50 to 53 (WMND), Gln-69, Trp-77, and 113 to 114 (WS) each bind substrate. The active site involves Asp-53. N-linked (GlcNAc...) asparagine glycosylation is present at Asn-147. A substrate-binding site is contributed by 179-180 (RD). An N-linked (GlcNAc...) asparagine glycan is attached at Asn-217. Residue Glu-235 participates in substrate binding. N-linked (GlcNAc...) asparagine glycosylation is found at Asn-297 and Asn-329. The cysteines at positions 428 and 480 are disulfide-linked.

The protein belongs to the glycosyl hydrolase 32 family. As to expression, expressed in seedlings, leaves, flowers, and seeds.

Its subcellular location is the secreted. The protein localises to the extracellular space. It is found in the apoplast. The protein resides in the cell wall. The enzyme catalyses Hydrolysis of terminal, non-reducing (2-&gt;1)- and (2-&gt;6)-linked beta-D-fructofuranose residues in fructans.. 6-fructan exohydrolase that can use phlein, levan, neokestose, levanbiose, 6-kestose, and 1-kestose as substrates. This Arabidopsis thaliana (Mouse-ear cress) protein is Beta-fructofuranosidase, insoluble isoenzyme CWINV3 (CWINV3).